Consider the following 693-residue polypeptide: E3 ubiquitin-protein ligase MARCHF7 (693 aa).

At M1 the chain carries N-acetylmethionine. 7 disordered regions span residues 1-43 (MESK…RDSS), 69-136 (ESEI…LGSF), 158-281 (LMDY…RRTT), 296-342 (FFSR…EGRA), 361-430 (LSQN…RDSN), 445-475 (AANRPQASGASSSAAAGGSTPELPQGGRNPG), and 512-533 (WNSTDGKNDKAKSAPSRDPEKL). Composition is skewed to polar residues over residues 14–36 (VQPSGSLSTRMVSGNRGTSLNDS), 95–105 (SCTNCASTSAG), 112–132 (LNTVSDSSWRHSQVPRSSSMV), 167–184 (DFTTSSYVQERVPSSYSQ), and 192–215 (AVSTLQLNSSSTNHQLPSDHQTVP). Over residues 216 to 234 (SSRDSSRSSFRSHFSPRQS) the composition is skewed to low complexity. Positions 236–267 (SFRNSSHPAFSYFSSRNETPTISNSERGSSQR) are enriched in polar residues. Basic and acidic residues predominate over residues 268-279 (PYRESSDNEGRR). The segment covering 296-305 (FFSRRSSQDS) has biased composition (low complexity). Residues 306-323 (LNTRSLSSENYISPRTLT) are compositionally biased toward polar residues. S318 is modified (phosphoserine). The segment covering 324-337 (SQSRNNGTSSSSDV) has biased composition (low complexity). Position 390 is a phosphoserine (S390). Low complexity predominate over residues 451 to 463 (ASGASSSAAAGGS). The segment covering 517-533 (GKNDKAKSAPSRDPEKL) has biased composition (basic and acidic residues). An RING-CH-type zinc finger spans residues 546-616 (DDEEEGDLCR…ELCKEKLQLN (71 aa)). Zn(2+)-binding residues include C554, C557, C572, C574, H582, C585, C606, and C609. T688 is modified (phosphothreonine). The residue at position 689 (S689) is a Phosphoserine.

Expressed in brain, thymus, muscle and kidney.

It localises to the cytoplasm. It catalyses the reaction S-ubiquitinyl-[E2 ubiquitin-conjugating enzyme]-L-cysteine + [acceptor protein]-L-lysine = [E2 ubiquitin-conjugating enzyme]-L-cysteine + N(6)-ubiquitinyl-[acceptor protein]-L-lysine.. The protein operates within protein modification; protein ubiquitination. Its function is as follows. E3 ubiquitin-protein ligase which may specifically enhance the E2 activity of HIP2. E3 ubiquitin ligases accept ubiquitin from an E2 ubiquitin-conjugating enzyme in the form of a thioester and then directly transfer the ubiquitin to targeted substrates. May be involved in T-cell proliferation by regulating LIF secretion. May play a role in lysosome homeostasis. Promotes 'Lys-6', 'Lys-11' and 'Lys-63'-linked mixed polyubiquitination on ATG14 leading to the inhibition of autophagy by impairing the interaction between ATG14 and STX7. Participates in the dopamine-mediated negative regulation of the NLRP3 inflammasome by promoting its uibiquitination and subsequent degradation. The polypeptide is E3 ubiquitin-protein ligase MARCHF7 (Marchf7) (Mus musculus (Mouse)).